The following is a 788-amino-acid chain: Protein translocase subunit SecA (788 aa).

Residues Gln85, 103 to 107, and Asp494 contribute to the ATP site; that span reads GEGKT.

This sequence belongs to the SecA family. As to quaternary structure, monomer and homodimer. Part of the essential Sec protein translocation apparatus which comprises SecA, SecYEG and auxiliary proteins SecDF. Other proteins may also be involved.

The protein localises to the cell membrane. Its subcellular location is the cytoplasm. It catalyses the reaction ATP + H2O + cellular proteinSide 1 = ADP + phosphate + cellular proteinSide 2.. In terms of biological role, part of the Sec protein translocase complex. Interacts with the SecYEG preprotein conducting channel. Has a central role in coupling the hydrolysis of ATP to the transfer of proteins into and across the cell membrane, serving as an ATP-driven molecular motor driving the stepwise translocation of polypeptide chains across the membrane. The chain is Protein translocase subunit SecA from Oenococcus oeni (strain ATCC BAA-331 / PSU-1).